The following is a 450-amino-acid chain: Tripartite motif-containing protein 64C (450 aa).

The segment at 15 to 56 (CCICVNYFIDPVTTDCVHSFCRPCLCLCSEEGRAPMRCPLCR) adopts an RING-type zinc-finger fold. The B box-type zinc-finger motif lies at 87–128 (SSDNICVLHEETKELFCEADKRLLCGPCSESPEHMAHSHSPI). Zn(2+)-binding residues include Cys-92, His-95, Cys-114, and His-120. Positions 191–218 (DEEEQRHLQALEREAKELFQQLQDSQVR) form a coiled coil. The B30.2/SPRY domain occupies 269 to 450 (ELTSWCITGV…LRPFFCFGCT (182 aa)).

Belongs to the TRIM/RBCC family.

The polypeptide is Tripartite motif-containing protein 64C (TRIM64C) (Homo sapiens (Human)).